Here is a 462-residue protein sequence, read N- to C-terminus: Argininosuccinate lyase (462 aa).

Belongs to the lyase 1 family. Argininosuccinate lyase subfamily.

It localises to the cytoplasm. The catalysed reaction is 2-(N(omega)-L-arginino)succinate = fumarate + L-arginine. It participates in amino-acid biosynthesis; L-arginine biosynthesis; L-arginine from L-ornithine and carbamoyl phosphate: step 3/3. This chain is Argininosuccinate lyase, found in Bacillus thuringiensis (strain Al Hakam).